The sequence spans 52 residues: Large ribosomal subunit protein eL40 (52 aa).

Zn(2+) is bound by residues Cys20, Cys23, Cys34, and Cys39.

The protein belongs to the eukaryotic ribosomal protein eL40 family. In terms of assembly, component of the large ribosomal subunit. Mature ribosomes consist of a small (40S) and a large (60S) subunit. The 40S subunit contains about 32 different proteins and 1 molecule of RNA (18S). The 60S subunit contains 45 different proteins and 3 molecules of RNA (25S, 5.8S and 5S). The cofactor is Zn(2+).

Its subcellular location is the cytoplasm. Its function is as follows. Component of the ribosome, a large ribonucleoprotein complex responsible for the synthesis of proteins in the cell. The small ribosomal subunit (SSU) binds messenger RNAs (mRNAs) and translates the encoded message by selecting cognate aminoacyl-transfer RNA (tRNA) molecules. The large subunit (LSU) contains the ribosomal catalytic site termed the peptidyl transferase center (PTC), which catalyzes the formation of peptide bonds, thereby polymerizing the amino acids delivered by tRNAs into a polypeptide chain. The nascent polypeptides leave the ribosome through a tunnel in the LSU and interact with protein factors that function in enzymatic processing, targeting, and the membrane insertion of nascent chains at the exit of the ribosomal tunnel. In Candida albicans (strain SC5314 / ATCC MYA-2876) (Yeast), this protein is Large ribosomal subunit protein eL40.